A 503-amino-acid polypeptide reads, in one-letter code: Cytochrome P450 11B1, mitochondrial (503 aa).

The transit peptide at 1-24 directs the protein to the mitochondrion; it reads MALRAKAEVCMAVPWLSLQRAQAL. A heme-binding site is contributed by Cys450.

This sequence belongs to the cytochrome P450 family. The cofactor is heme. Expressed in the zona fasciculata/reticularis of the adrenal cortex.

Its subcellular location is the mitochondrion inner membrane. The enzyme catalyses a steroid + 2 reduced [adrenodoxin] + O2 + 2 H(+) = an 11beta-hydroxysteroid + 2 oxidized [adrenodoxin] + H2O. It carries out the reaction 11-deoxycortisol + 2 reduced [adrenodoxin] + O2 + 2 H(+) = cortisol + 2 oxidized [adrenodoxin] + H2O. The catalysed reaction is 21-hydroxyprogesterone + 2 reduced [adrenodoxin] + O2 + 2 H(+) = corticosterone + 2 oxidized [adrenodoxin] + H2O. Its pathway is steroid biosynthesis; glucocorticoid biosynthesis. It participates in steroid hormone biosynthesis. In terms of biological role, a cytochrome P450 monooxygenase involved in the biosynthesis of adrenal corticoids. Catalyzes a variety of reactions that are essential for many species, including detoxification, defense, and the formation of endogenous chemicals like steroid hormones. Steroid 11beta, 18- and 19-hydroxylase with preferred regioselectivity at 11beta, then 18, and lastly 19. Catalyzes the hydroxylation of 11-deoxycortisol and 11-deoxycorticosterone (21-hydroxyprogesterone) at 11beta position, yielding cortisol or corticosterone, respectively, but cannot produce aldosterone. Mechanistically, uses molecular oxygen inserting one oxygen atom into a substrate for hydroxylation and reducing the second into a water molecule. Two electrons are provided by NADPH via a two-protein mitochondrial transfer system comprising flavoprotein FDXR (adrenodoxin/ferredoxin reductase) and nonheme iron-sulfur protein FDX1 or FDX2 (adrenodoxin/ferredoxin). Due to its lack of 18-oxidation activity, it is incapable of generating aldosterone. Could also be involved in the androgen metabolic pathway. In Homo sapiens (Human), this protein is Cytochrome P450 11B1, mitochondrial.